A 449-amino-acid polypeptide reads, in one-letter code: UDP-N-acetylmuramoylalanine--D-glutamate ligase (449 aa).

118-124 (GSNGKTT) contacts ATP.

It belongs to the MurCDEF family.

It is found in the cytoplasm. It carries out the reaction UDP-N-acetyl-alpha-D-muramoyl-L-alanine + D-glutamate + ATP = UDP-N-acetyl-alpha-D-muramoyl-L-alanyl-D-glutamate + ADP + phosphate + H(+). It functions in the pathway cell wall biogenesis; peptidoglycan biosynthesis. In terms of biological role, cell wall formation. Catalyzes the addition of glutamate to the nucleotide precursor UDP-N-acetylmuramoyl-L-alanine (UMA). This chain is UDP-N-acetylmuramoylalanine--D-glutamate ligase, found in Oceanobacillus iheyensis (strain DSM 14371 / CIP 107618 / JCM 11309 / KCTC 3954 / HTE831).